The chain runs to 104 residues: MAAKIRRQDEVIVLAGKDQGKRGKVSQVLPTGKLIVEGLNLVKKHQKPNPQLGVAGGIVEQEAPIQASNVAIFNSATGKADRVGFRFEDGKKVRFFKSNSELVK.

This sequence belongs to the universal ribosomal protein uL24 family. As to quaternary structure, part of the 50S ribosomal subunit.

Its function is as follows. One of two assembly initiator proteins, it binds directly to the 5'-end of the 23S rRNA, where it nucleates assembly of the 50S subunit. One of the proteins that surrounds the polypeptide exit tunnel on the outside of the subunit. This chain is Large ribosomal subunit protein uL24, found in Shewanella halifaxensis (strain HAW-EB4).